The sequence spans 318 residues: NLP effector protein 9 (318 aa).

Positions 1–19 (MRLFAFLWSSVAFLSTVQA) are cleaved as a signal peptide. Residues 24 to 35 (TASQTQDDSSTP) show a composition bias toward low complexity. 2 disordered regions span residues 24–43 (TASQ…PDKY) and 50–93 (LRTK…PAPT). A compositionally biased stretch (polar residues) spans 55 to 65 (PMATPNRTIMP). A glycan (N-linked (GlcNAc...) asparagine) is linked at Asn-60. Over residues 73–93 (PEPPTPEPTYLPTLSPTPAPT) the composition is skewed to pro residues. The short motif at 185-195 (AIMYSWYFPKD) is the Conserved undecapeptide motif I element. Positions 202–208 (GHRHDWE) match the Hepta-peptide GHRHDWE motif II motif.

The protein belongs to the Necrosis inducing protein (NPP1) family.

The protein localises to the secreted. Secreted effector that contributes to virulence during infection by P.capsici. Induces distinct chlorosis at 3 days after inoculation of host C.annuum leaves, and all the chlorotic areas gradually turn brown and become moderately necrotic at 7 days after inoculation. Caused only small necrotic areas at 7 days after non-host N.benthamiana leaves infection. This chain is NLP effector protein 9, found in Phytophthora capsici.